Here is a 405-residue protein sequence, read N- to C-terminus: UDP-N-acetylglucosamine--N-acetylmuramyl-(pentapeptide) pyrophosphoryl-undecaprenol N-acetylglucosamine transferase (405 aa).

UDP-N-acetyl-alpha-D-glucosamine is bound by residues 11–13 (TGG), Asn-127, Arg-168, Ser-191, Ile-248, and Gln-293.

It belongs to the glycosyltransferase 28 family. MurG subfamily.

It localises to the cell inner membrane. The enzyme catalyses di-trans,octa-cis-undecaprenyl diphospho-N-acetyl-alpha-D-muramoyl-L-alanyl-D-glutamyl-meso-2,6-diaminopimeloyl-D-alanyl-D-alanine + UDP-N-acetyl-alpha-D-glucosamine = di-trans,octa-cis-undecaprenyl diphospho-[N-acetyl-alpha-D-glucosaminyl-(1-&gt;4)]-N-acetyl-alpha-D-muramoyl-L-alanyl-D-glutamyl-meso-2,6-diaminopimeloyl-D-alanyl-D-alanine + UDP + H(+). The protein operates within cell wall biogenesis; peptidoglycan biosynthesis. Cell wall formation. Catalyzes the transfer of a GlcNAc subunit on undecaprenyl-pyrophosphoryl-MurNAc-pentapeptide (lipid intermediate I) to form undecaprenyl-pyrophosphoryl-MurNAc-(pentapeptide)GlcNAc (lipid intermediate II). This chain is UDP-N-acetylglucosamine--N-acetylmuramyl-(pentapeptide) pyrophosphoryl-undecaprenol N-acetylglucosamine transferase, found in Sorangium cellulosum (strain So ce56) (Polyangium cellulosum (strain So ce56)).